A 302-amino-acid polypeptide reads, in one-letter code: N-acetylmuramic acid 6-phosphate etherase (302 aa).

Residues 55–218 (AYPKFDQGGR…STGIMVKSGK (164 aa)) form the SIS domain. Glu-83 serves as the catalytic Proton donor. The active site involves Glu-114.

It belongs to the GCKR-like family. MurNAc-6-P etherase subfamily. Homodimer.

It catalyses the reaction N-acetyl-D-muramate 6-phosphate + H2O = N-acetyl-D-glucosamine 6-phosphate + (R)-lactate. It functions in the pathway amino-sugar metabolism; N-acetylmuramate degradation. Its function is as follows. Specifically catalyzes the cleavage of the D-lactyl ether substituent of MurNAc 6-phosphate, producing GlcNAc 6-phosphate and D-lactate. The polypeptide is N-acetylmuramic acid 6-phosphate etherase (Levilactobacillus brevis (strain ATCC 367 / BCRC 12310 / CIP 105137 / JCM 1170 / LMG 11437 / NCIMB 947 / NCTC 947) (Lactobacillus brevis)).